The sequence spans 201 residues: Oligoribonuclease (201 aa).

In terms of domain architecture, Exonuclease spans Leu-20–Leu-183. Residue Tyr-141 is part of the active site.

This sequence belongs to the oligoribonuclease family.

The protein resides in the cytoplasm. Its function is as follows. 3'-to-5' exoribonuclease specific for small oligoribonucleotides. The chain is Oligoribonuclease from Burkholderia mallei (strain NCTC 10229).